The chain runs to 1488 residues: MIERGKFRSLTLINWNGFFARTFDLDELVTTLSGGNGAGKSTTMAAFVTALIPDLTLLHFRNTTEAGATSGSRDKGLHGKLKAGVCYSMLDTINSRHQRVVVGVRLQQVAGRDRKVDIKPFAIQGLPMSVQPTQLVTETLNERQARVLSLAELKDKLDEMEGVQFKQFNSITDYHSLMFDLGIIARRLRSASDRSKFYRLIEASLYGGISSAITRSLRDYLLPENSGVRKAFQDMEAALRENRLTLEAIRVTQSDRDLFKHLISEATDYVAADYMRHANERRVHLDQALAFRRELYTSRKQLAAEQYKHVDMARELGEHNGAEGSLEADYQAASDHLNLVQTALRQQEKIERYEADLEELQIRLEEQNEVVAEAAEMQDENEARAEAAELEVDELKSQLADDQQALDVQQTRAIQYNQAISALARAKELCHLPDLTPESAAEWLDTFQAKEQEATEKLLSLEQKMSVAQTAHSQFEQAYQLVAAINGPLARSEAWDVARELLRDGVNQRHLAEQVQPLRMRLSELEQRLREQQEAERLLAEFCKRQGKNFDIDELEALHQELEARIASLSESVSSASEQRMALRQEQEQLQSRIQHLMRRAPVWLAAQNSLNQLSEQCGEEFTSSQEVTEYLQQLLEREREAIVERDEVGARKNAVDEEIERLSQPGGAEDQRLNALAERFGGVLLSEIYDDVSLEDAPYFSALYGPSRHAIVVPDLSQIAEQLEGLTDCPEDLYLIEGDPQSFDDSVFSVDELEKAVVVKIADRQWRYSRFPSLPIFGRAARENRIESLHAEREVLSERFATLSFDVQKTQRLHQAFSRFIGSHLSVAFEDDPEAEIRRLNGRRVELERALATHENDNQQQRLQFEQAKEGVSALNRLLPRLNLLADETLADRVDEIQERLDEAQEAARFVQQYGNQLAKLEPVVSVLQSDPEQFEQLKEDYAWSQQMQRDARQQAFALAEVVERRAHFSYSDSAEMLSGNSDLNEKLRQRLEQAEAERTRAREALRSHAAQLSQYSQVLASLKSSYDTKKELLNDLQRELQDIGVRADSGAEERARQRRDELHAQLSNNRSRRNQLEKALTFCEAEMENLTRKLRKLERDYHEMREQVVTAKAGWCAVMRMVKDNGVERRLHRRELAYLSADELRSMSDKALGALRLAIADNEHLRDVLRLSEDPKRPERKIQFFVAVYQHLRERIRQDIIRTDDPVEAIEQMEIELSRLTEELTSREQKLAISSRSVANIIRKTIQREQNRIRMLNQGLQSVSFGQVNSVRLNVNVRETHATLLDVLSEQQEQHQDLFNSNRLTFSEALAKLYQRLNPQIDMGQRTPQTIGEELLDYRNYLEMEVEVNRGSDGWLRAESGALSTGEAIGTGMSILVMVVQSWEDEARRLRGKDISPCRLLFLDEAARLDARSIATLFELCERLQMQLIIAAPENISPEKGTTYKLVRKVFQNTEHVHVVGLRGFAPQLPETLPGTQTEDTPSEAS.

34–41 lines the ATP pocket; that stretch reads GGNGAGKS. Coiled-coil stretches lie at residues 326–413, 444–472, and 509–602; these read LEAD…QTRA, LDTFQAKEQEATEKLLSLEQKMSVAQTAH, and RHLA…RRAP. The tract at residues 666–783 is flexible hinge; that stretch reads PGGAEDQRLN…SLPIFGRAAR (118 aa). Coiled-coil stretches lie at residues 835 to 923, 977 to 1116, and 1209 to 1265; these read EAEI…AKLE, EMLS…AKAG, and VEAI…LQSV.

It belongs to the SMC family. MukB subfamily. As to quaternary structure, homodimerization via its hinge domain. Binds to DNA via its C-terminal region. Interacts, and probably forms a ternary complex, with MukE and MukF via its C-terminal region. The complex formation is stimulated by calcium or magnesium. Interacts with tubulin-related protein FtsZ.

Its subcellular location is the cytoplasm. The protein localises to the nucleoid. Functionally, plays a central role in chromosome condensation, segregation and cell cycle progression. Functions as a homodimer, which is essential for chromosome partition. Involved in negative DNA supercoiling in vivo, and by this means organize and compact chromosomes. May achieve or facilitate chromosome segregation by condensation DNA from both sides of a centrally located replisome during cell division. The chain is Chromosome partition protein MukB from Salmonella paratyphi C (strain RKS4594).